The sequence spans 646 residues: Beta-mannosyltransferase 6 (646 aa).

Over 1-25 the chain is Cytoplasmic; sequence MGNYKPSIKQYVVTVKAIKSSQFGR. Residues 26–46 form a helical membrane-spanning segment; it reads LGICAVVLLFVLGYPFYFISN. Residues 47 to 646 lie on the Extracellular side of the membrane; that stretch reads NPFDTSIRYQ…LTGGWLPSHN (600 aa). 9 N-linked (GlcNAc...) asparagine glycosylation sites follow: Asn62, Asn81, Asn103, Asn117, Asn127, Asn132, Asn146, Asn334, and Asn393.

The protein belongs to the BMT family.

The protein localises to the membrane. Its function is as follows. Beta-mannosyltransferase involved in cell wall biosynthesis. Required for beta-1,2-mannose transfer on phospholipomannan. Required for pro-inflammatory response in macrophages through phospholipomannan-induced TNF-alpha production. In Candida albicans (strain SC5314 / ATCC MYA-2876) (Yeast), this protein is Beta-mannosyltransferase 6 (BMT6).